The sequence spans 246 residues: E3 ubiquitin-protein ligase RNF182 (246 aa).

The segment at 22 to 70 (CKICYNRYNLRQRKPKVLGCCHRVCAKCLYKLVDCGESPQCVIVCPFCR) adopts an RING-type zinc-finger fold. 2 helical membrane passes run 184–204 (VFVW…IYLL) and 211–231 (LGVV…IYGF).

Interacts with ATP6V0C.

It is found in the membrane. The protein localises to the cytoplasm. It carries out the reaction S-ubiquitinyl-[E2 ubiquitin-conjugating enzyme]-L-cysteine + [acceptor protein]-L-lysine = [E2 ubiquitin-conjugating enzyme]-L-cysteine + N(6)-ubiquitinyl-[acceptor protein]-L-lysine.. It participates in protein modification; protein ubiquitination. Its function is as follows. E3 ubiquitin-protein ligase that mediates the ubiquitination of atp6v0c and targets it to degradation via the ubiquitin-proteasome pathway. The protein is E3 ubiquitin-protein ligase RNF182 (rnf182) of Xenopus laevis (African clawed frog).